The following is a 274-amino-acid chain: Diaminopimelate epimerase (274 aa).

Substrate contacts are provided by N11, Q44, and N64. C73 (proton donor) is an active-site residue. Substrate contacts are provided by residues 74–75, N157, N190, and 208–209; these read GN and ER. The Proton acceptor role is filled by C217. 218-219 is a substrate binding site; that stretch reads GS.

Belongs to the diaminopimelate epimerase family. As to quaternary structure, homodimer.

The protein resides in the cytoplasm. The enzyme catalyses (2S,6S)-2,6-diaminopimelate = meso-2,6-diaminopimelate. It functions in the pathway amino-acid biosynthesis; L-lysine biosynthesis via DAP pathway; DL-2,6-diaminopimelate from LL-2,6-diaminopimelate: step 1/1. Catalyzes the stereoinversion of LL-2,6-diaminopimelate (L,L-DAP) to meso-diaminopimelate (meso-DAP), a precursor of L-lysine and an essential component of the bacterial peptidoglycan. In Haemophilus ducreyi (strain 35000HP / ATCC 700724), this protein is Diaminopimelate epimerase.